Consider the following 396-residue polypeptide: Phosphopentomutase (396 aa).

6 residues coordinate Mn(2+): D13, D288, H293, D329, H330, and H341.

It belongs to the phosphopentomutase family. Requires Mn(2+) as cofactor.

It is found in the cytoplasm. The enzyme catalyses 2-deoxy-alpha-D-ribose 1-phosphate = 2-deoxy-D-ribose 5-phosphate. It carries out the reaction alpha-D-ribose 1-phosphate = D-ribose 5-phosphate. Its pathway is carbohydrate degradation; 2-deoxy-D-ribose 1-phosphate degradation; D-glyceraldehyde 3-phosphate and acetaldehyde from 2-deoxy-alpha-D-ribose 1-phosphate: step 1/2. In terms of biological role, isomerase that catalyzes the conversion of deoxy-ribose 1-phosphate (dRib-1-P) and ribose 1-phosphate (Rib-1-P) to deoxy-ribose 5-phosphate (dRib-5-P) and ribose 5-phosphate (Rib-5-P), respectively. This Clostridium perfringens (strain 13 / Type A) protein is Phosphopentomutase.